The primary structure comprises 260 residues: Ribonuclease 3 (260 aa).

The segment at 1–24 is disordered; that stretch reads MAQSSKYQRKPRSGERKRSQRRLE. Positions 12-24 are enriched in basic and acidic residues; the sequence is RSGERKRSQRRLE. An RNase III domain is found at 33-162; it reads FDDLLVRTGL…FIGALYMDQG (130 aa). Glu75 lines the Mg(2+) pocket. Residue Asp79 is part of the active site. Residues Asp148 and Glu151 each contribute to the Mg(2+) site. The active site involves Glu151. The region spanning 188-257 is the DRBM domain; sequence DFKSQLQEFV…AKQALLALNQ (70 aa).

It belongs to the ribonuclease III family. Homodimer. Requires Mg(2+) as cofactor.

It is found in the cytoplasm. It catalyses the reaction Endonucleolytic cleavage to 5'-phosphomonoester.. In terms of biological role, digests double-stranded RNA. Involved in the processing of primary rRNA transcript to yield the immediate precursors to the large and small rRNAs (23S and 16S). Processes some mRNAs, and tRNAs when they are encoded in the rRNA operon. Processes pre-crRNA and tracrRNA of type II CRISPR loci if present in the organism. The chain is Ribonuclease 3 from Shouchella clausii (strain KSM-K16) (Alkalihalobacillus clausii).